We begin with the raw amino-acid sequence, 152 residues long: SXP/RAL-2 family protein Ani s 5 (152 aa).

The signal sequence occupies residues methionine 1–alanine 18. Necessary for IgE-binding stretches follow at residues proline 25–leucine 42, lysine 49–isoleucine 54, leucine 58–glycine 66, and lysine 103–glycine 120. 2 igG4-binding regions span residues lysine 49–aspartate 68 and leucine 118–serine 137. Residues isoleucine 127–isoleucine 146 form an igE-binding and IgG4-binding region.

This sequence belongs to the SXP/RAL-2 family. As to quaternary structure, monomer. Excretory gland, ventriculus, and the luminal epithelium of the intestine of the larvae.

Its subcellular location is the secreted. The protein is SXP/RAL-2 family protein Ani s 5 of Anisakis simplex (Herring worm).